A 433-amino-acid chain; its full sequence is 3-phosphoshikimate 1-carboxyvinyltransferase (433 aa).

The 3-phosphoshikimate site is built by lysine 15, serine 16, and arginine 20. Position 15 (lysine 15) interacts with phosphoenolpyruvate. Phosphoenolpyruvate contacts are provided by glycine 96 and arginine 124. 3-phosphoshikimate contacts are provided by serine 169, glutamine 171, aspartate 318, and lysine 345. Glutamine 171 is a phosphoenolpyruvate binding site. Residue aspartate 318 is the Proton acceptor of the active site. Residues arginine 349 and arginine 393 each coordinate phosphoenolpyruvate.

The protein belongs to the EPSP synthase family. As to quaternary structure, monomer.

It is found in the cytoplasm. The catalysed reaction is 3-phosphoshikimate + phosphoenolpyruvate = 5-O-(1-carboxyvinyl)-3-phosphoshikimate + phosphate. The protein operates within metabolic intermediate biosynthesis; chorismate biosynthesis; chorismate from D-erythrose 4-phosphate and phosphoenolpyruvate: step 6/7. Catalyzes the transfer of the enolpyruvyl moiety of phosphoenolpyruvate (PEP) to the 5-hydroxyl of shikimate-3-phosphate (S3P) to produce enolpyruvyl shikimate-3-phosphate and inorganic phosphate. The protein is 3-phosphoshikimate 1-carboxyvinyltransferase of Chlorobium phaeovibrioides (strain DSM 265 / 1930) (Prosthecochloris vibrioformis (strain DSM 265)).